Reading from the N-terminus, the 161-residue chain is Allophycocyanin beta chain (161 aa).

Position 71 is an N4-methylasparagine (Asn71). Residue Cys81 participates in (2R,3E)-phycocyanobilin binding.

It belongs to the phycobiliprotein family. Heterodimer of an alpha and a beta chain. In terms of processing, contains one covalently linked phycocyanobilin chromophore.

The protein resides in the cellular thylakoid membrane. Light-harvesting photosynthetic bile pigment-protein from the phycobiliprotein complex. Allophycocyanin has a maximum absorption at approximately 650 nanometers. The polypeptide is Allophycocyanin beta chain (apcB) (Synechococcus sp. (strain ATCC 27144 / PCC 6301 / SAUG 1402/1) (Anacystis nidulans)).